The following is a 336-amino-acid chain: Probable assembly chaperone of rpl4 (336 aa).

TPR repeat units lie at residues 39–72 (GRAF…SKNL), 75–108 (DQGY…LERL), 110–143 (IDKG…QPDA), and 162–195 (AEAL…ISRA). Residues 316–336 (DEENEEAEWETSENEEEMDED) form a disordered region.

It belongs to the ACL4 family.

The protein localises to the cytoplasm. Its subcellular location is the nucleus. It localises to the nucleolus. In terms of biological role, acts as a chaperone for the L4 ribosomal subunit encoded by rpl4A and rpl4B, required for hierarchical ribosome assembly. Shields ribosomal protein L4 until timely release and insertion into the pre-ribosome is possible, once ribosomal protein L18 is present. In Schizosaccharomyces pombe (strain 972 / ATCC 24843) (Fission yeast), this protein is Probable assembly chaperone of rpl4.